Reading from the N-terminus, the 95-residue chain is Putative protein RDUR (95 aa).

Residues methionine 1–serine 12 show a composition bias toward basic and acidic residues. Residues methionine 1 to cysteine 20 are disordered.

In terms of biological role, could play a role in innate immunity against viruses. The sequence is that of Putative protein RDUR from Homo sapiens (Human).